The chain runs to 190 residues: Prostaglandin-H2 D-isomerase (190 aa).

The first 22 residues, 1 to 22, serve as a signal peptide directing secretion; the sequence is MATHHTLWMGLALLGVLGDLQA. A glycan (O-linked (GalNAc...) serine) is linked at serine 29. Asparagine 51 carries N-linked (GlcNAc...) (complex) asparagine glycosylation. Cysteine 65 (nucleophile) is an active-site residue. Asparagine 78 is a glycosylation site (N-linked (GlcNAc...) (complex) asparagine). Cysteine 89 and cysteine 186 are joined by a disulfide.

It belongs to the calycin superfamily. Lipocalin family. Monomer. N- and O-glycosylated. Both N-glycosylation recognition sites are almost quantitatively occupied by N-glycans of the biantennary complex type, with a considerable proportion of structures bearing a bisecting GlcNAc. N-glycan at Asn-78: dHex1Hex5HexNAc4. Agalacto structure as well as sialylated and nonsialylated oligosaccharides bearing alpha2-3- and/or alpha2-6-linked NeuNAc are present. Abundant in the brain and CNS, where it is expressed in tissues of the blood-brain barrier and secreted into the cerebro-spinal fluid. Abundantly expressed in the heart. In the male reproductive system, it is expressed in the testis, epididymis and prostate, and is secreted into the seminal fluid. Expressed in the eye and secreted into the aqueous humor. Lower levels detected in various tissue fluids such as serum, normal urine, ascitic fluid and tear fluid. Also found in a number of other organs including ovary, fimbriae of the fallopian tubes, kidney, leukocytes.

Its subcellular location is the rough endoplasmic reticulum. It localises to the nucleus membrane. The protein resides in the golgi apparatus. The protein localises to the cytoplasm. It is found in the perinuclear region. Its subcellular location is the secreted. The enzyme catalyses prostaglandin H2 = prostaglandin D2. Functionally, catalyzes the conversion of PGH2 to PGD2, a prostaglandin involved in smooth muscle contraction/relaxation and a potent inhibitor of platelet aggregation. Involved in a variety of CNS functions, such as sedation, NREM sleep and PGE2-induced allodynia, and may have an anti-apoptotic role in oligodendrocytes. Binds small non-substrate lipophilic molecules, including biliverdin, bilirubin, retinal, retinoic acid and thyroid hormone, and may act as a scavenger for harmful hydrophobic molecules and as a secretory retinoid and thyroid hormone transporter. Possibly involved in development and maintenance of the blood-brain, blood-retina, blood-aqueous humor and blood-testis barrier. It is likely to play important roles in both maturation and maintenance of the central nervous system and male reproductive system. Involved in PLA2G3-dependent maturation of mast cells. PLA2G3 is secreted by immature mast cells and acts on nearby fibroblasts upstream to PTDGS to synthesize PGD2, which in turn promotes mast cell maturation and degranulation via PTGDR. The chain is Prostaglandin-H2 D-isomerase (PTGDS) from Homo sapiens (Human).